Here is a 424-residue protein sequence, read N- to C-terminus: UDP-N-acetylglucosamine 1-carboxyvinyltransferase (424 aa).

Lys-22–Asn-23 provides a ligand contact to phosphoenolpyruvate. Arg-93 provides a ligand contact to UDP-N-acetyl-alpha-D-glucosamine. Cys-117 acts as the Proton donor in catalysis. Residue Cys-117 is modified to 2-(S-cysteinyl)pyruvic acid O-phosphothioketal. UDP-N-acetyl-alpha-D-glucosamine is bound by residues Arg-122–Leu-126, Ser-164–Gly-166, Asp-307, and Ile-329.

The protein belongs to the EPSP synthase family. MurA subfamily.

It is found in the cytoplasm. The enzyme catalyses phosphoenolpyruvate + UDP-N-acetyl-alpha-D-glucosamine = UDP-N-acetyl-3-O-(1-carboxyvinyl)-alpha-D-glucosamine + phosphate. Its pathway is cell wall biogenesis; peptidoglycan biosynthesis. Its function is as follows. Cell wall formation. Adds enolpyruvyl to UDP-N-acetylglucosamine. This Haemophilus influenzae (strain ATCC 51907 / DSM 11121 / KW20 / Rd) protein is UDP-N-acetylglucosamine 1-carboxyvinyltransferase.